The chain runs to 345 residues: Prenyltransferase ltmC (345 aa).

His-112 provides a ligand contact to substrate. Residues Asp-119 and Asp-123 each contribute to the Mg(2+) site. A substrate-binding site is contributed by Arg-128. Asn-130 carries an N-linked (GlcNAc...) asparagine glycan. Residues Lys-212, Thr-213, Gln-243, Asn-250, and Lys-260 each coordinate substrate.

It belongs to the FPP/GGPP synthase family. Mg(2+) serves as cofactor.

It functions in the pathway secondary metabolite biosynthesis. Functionally, prenyltransferase; part of the gene cluster that mediates the biosynthesis of lolitrems, indole-diterpene mycotoxins that are potent tremorgens in mammals, and are synthesized by clavicipitaceous fungal endophytes in association with their grass hosts. The geranylgeranyl diphosphate (GGPP) synthase ltmG is proposed to catalyze the first step in lolitrem biosynthesis. LtmG catalyzes a series of iterative condensations of isopentenyl diphosphate (IPP) with dimethylallyl diphosphate (DMAPP), geranyl diphosphate (GPP), and farnesyl diphosphate (FPP), to form GGPP. GGPP then condenses with indole-3-glycerol phosphate to form 3-geranylgeranylindole, an acyclic intermediate, to be incorporated into paxilline. Either ltmG or ltmC could be responsible for this step, as both are putative prenyl transferases. The FAD-dependent monooxygenase ltmM then catalyzes the epoxidation of the two terminal alkenes of the geranylgeranyl moiety, which is subsequently cyclized by ltmB, to paspaline. The cytochrome P450 monooxygenases ltmQ and ltmP can sequentially oxidize paspaline to terpendole E and terpendole F. Alternatively, ltmP converts paspaline to an intermediate which is oxidized by ltmQ to terpendole F. LtmF, ltmK, ltmE and ltmJ appear to be unique to the epichloe endophytes. The prenyltransferase ltmF is involved in the 27-hydroxyl-O-prenylation. The cytochrome P450 monooxygenase ltmK is required for the oxidative acetal ring formation. The multi-functional prenyltransferase ltmE is required for C20- and C21-prenylations of the indole ring of paspalanes and acts together with the cytochrome P450 monooxygenase ltmJ to yield lolitremanes by multiple oxidations and ring closures. The stereoisomer pairs of lolitriol and lolitrem N or lolitrem B and lolitrem F may be attributed to variations in the way in which ring closure can occur under the action of ltmJ. While the major product of this pathway is lolitrem B, the prenyl transferases and cytochrome P450 monooxygenases identified in this pathway have a remarkable versatility in their regio- and stereo-specificities to generate a diverse range of metabolites that are products of a metabolic grid rather than a linear pathway. In Epichloe festucae var. lolii (Neotyphodium lolii), this protein is Prenyltransferase ltmC.